A 142-amino-acid chain; its full sequence is Large ribosomal subunit protein uL11 (142 aa).

Belongs to the universal ribosomal protein uL11 family. As to quaternary structure, part of the ribosomal stalk of the 50S ribosomal subunit. Interacts with L10 and the large rRNA to form the base of the stalk. L10 forms an elongated spine to which L12 dimers bind in a sequential fashion forming a multimeric L10(L12)X complex. Post-translationally, one or more lysine residues are methylated.

Functionally, forms part of the ribosomal stalk which helps the ribosome interact with GTP-bound translation factors. The chain is Large ribosomal subunit protein uL11 from Rhodopseudomonas palustris (strain BisA53).